The primary structure comprises 359 residues: Histidinol-phosphate aminotransferase (359 aa).

N6-(pyridoxal phosphate)lysine is present on K220.

Belongs to the class-II pyridoxal-phosphate-dependent aminotransferase family. Histidinol-phosphate aminotransferase subfamily. In terms of assembly, homodimer. Requires pyridoxal 5'-phosphate as cofactor.

It carries out the reaction L-histidinol phosphate + 2-oxoglutarate = 3-(imidazol-4-yl)-2-oxopropyl phosphate + L-glutamate. It functions in the pathway amino-acid biosynthesis; L-histidine biosynthesis; L-histidine from 5-phospho-alpha-D-ribose 1-diphosphate: step 7/9. The chain is Histidinol-phosphate aminotransferase from Neisseria gonorrhoeae (strain ATCC 700825 / FA 1090).